The primary structure comprises 291 residues: Probable endonuclease 4 (291 aa).

The Zn(2+) site is built by His72, His112, Glu147, Asp181, His184, His215, Asp228, His230, and Glu260.

The protein belongs to the AP endonuclease 2 family. Zn(2+) is required as a cofactor.

It carries out the reaction Endonucleolytic cleavage to 5'-phosphooligonucleotide end-products.. In terms of biological role, endonuclease IV plays a role in DNA repair. It cleaves phosphodiester bonds at apurinic or apyrimidinic (AP) sites, generating a 3'-hydroxyl group and a 5'-terminal sugar phosphate. This is Probable endonuclease 4 from Mycoplasma genitalium (strain ATCC 33530 / DSM 19775 / NCTC 10195 / G37) (Mycoplasmoides genitalium).